Reading from the N-terminus, the 287-residue chain is Bifunctional protein FolD (287 aa).

NADP(+)-binding positions include 165–167 (GRG), Thr-192, and Val-233.

This sequence belongs to the tetrahydrofolate dehydrogenase/cyclohydrolase family. In terms of assembly, homodimer.

It catalyses the reaction (6R)-5,10-methylene-5,6,7,8-tetrahydrofolate + NADP(+) = (6R)-5,10-methenyltetrahydrofolate + NADPH. It carries out the reaction (6R)-5,10-methenyltetrahydrofolate + H2O = (6R)-10-formyltetrahydrofolate + H(+). It participates in one-carbon metabolism; tetrahydrofolate interconversion. In terms of biological role, catalyzes the oxidation of 5,10-methylenetetrahydrofolate to 5,10-methenyltetrahydrofolate and then the hydrolysis of 5,10-methenyltetrahydrofolate to 10-formyltetrahydrofolate. This is Bifunctional protein FolD from Cutibacterium acnes (strain DSM 16379 / KPA171202) (Propionibacterium acnes).